Here is a 372-residue protein sequence, read N- to C-terminus: Mitogen-activated protein kinase kinase kinase 17 (372 aa).

The Protein kinase domain maps to 3-259 (WTRGRILGRG…ATQLLNHPFL (257 aa)). ATP-binding positions include 9-17 (LGRGSTATV) and Lys-32. The active-site Proton acceptor is Asp-126. Position 312 is a phosphoserine (Ser-312).

This sequence belongs to the protein kinase superfamily. Ser/Thr protein kinase family. In terms of assembly, binds to MKK3.

Its subcellular location is the nucleus. It carries out the reaction L-seryl-[protein] + ATP = O-phospho-L-seryl-[protein] + ADP + H(+). It catalyses the reaction L-threonyl-[protein] + ATP = O-phospho-L-threonyl-[protein] + ADP + H(+). Its function is as follows. Component of the abscisic acid (ABA) signaling pathway that may act as ABA signal transducer in the context of abiotic stresses. Triggers MPK7 activation in a MKK3-dependent manner. Mediates the ABA-dependent activation of the MKK3-MPK7 module. In Arabidopsis thaliana (Mouse-ear cress), this protein is Mitogen-activated protein kinase kinase kinase 17.